A 395-amino-acid polypeptide reads, in one-letter code: Succinyl-diaminopimelate desuccinylase (395 aa).

H74 lines the Zn(2+) pocket. The active site involves D76. A Zn(2+)-binding site is contributed by D107. E141 acts as the Proton acceptor in catalysis. Zn(2+)-binding residues include E142, E170, and H368.

It belongs to the peptidase M20A family. DapE subfamily. In terms of assembly, homodimer. Zn(2+) serves as cofactor. The cofactor is Co(2+).

It carries out the reaction N-succinyl-(2S,6S)-2,6-diaminopimelate + H2O = (2S,6S)-2,6-diaminopimelate + succinate. It functions in the pathway amino-acid biosynthesis; L-lysine biosynthesis via DAP pathway; LL-2,6-diaminopimelate from (S)-tetrahydrodipicolinate (succinylase route): step 3/3. Its function is as follows. Catalyzes the hydrolysis of N-succinyl-L,L-diaminopimelic acid (SDAP), forming succinate and LL-2,6-diaminopimelate (DAP), an intermediate involved in the bacterial biosynthesis of lysine and meso-diaminopimelic acid, an essential component of bacterial cell walls. In Brucella melitensis biotype 2 (strain ATCC 23457), this protein is Succinyl-diaminopimelate desuccinylase.